Reading from the N-terminus, the 367-residue chain is sn-glycerol-3-phosphate import ATP-binding protein UgpC (367 aa).

The region spanning 4–235 is the ABC transporter domain; the sequence is LSLRNVQKTY…PASTFVAGFI (232 aa). 37–44 provides a ligand contact to ATP; sequence GPSGCGKS.

This sequence belongs to the ABC transporter superfamily. sn-glycerol-3-phosphate importer (TC 3.A.1.1.3) family. As to quaternary structure, the complex is composed of two ATP-binding proteins (UgpC), two transmembrane proteins (UgpA and UgpE) and a solute-binding protein (UgpB).

It localises to the cell inner membrane. The enzyme catalyses sn-glycerol 3-phosphate(out) + ATP + H2O = sn-glycerol 3-phosphate(in) + ADP + phosphate + H(+). Its function is as follows. Part of the ABC transporter complex UgpBAEC involved in sn-glycerol-3-phosphate (G3P) import. Responsible for energy coupling to the transport system. The protein is sn-glycerol-3-phosphate import ATP-binding protein UgpC of Cupriavidus metallidurans (strain ATCC 43123 / DSM 2839 / NBRC 102507 / CH34) (Ralstonia metallidurans).